A 378-amino-acid chain; its full sequence is F-box/kelch-repeat protein At4g29370 (378 aa).

The F-box domain maps to T23 to R69. 4 Kelch repeats span residues G124 to D172, K173 to I218, V220 to S259, and W260 to R305.

The polypeptide is F-box/kelch-repeat protein At4g29370 (Arabidopsis thaliana (Mouse-ear cress)).